An 845-amino-acid polypeptide reads, in one-letter code: Beta-mannosidase B (845 aa).

An N-linked (GlcNAc...) asparagine glycan is attached at Asn252. The Proton donor role is filled by Glu432. N-linked (GlcNAc...) asparagine glycans are attached at residues Asn717 and Asn723.

The protein belongs to the glycosyl hydrolase 2 family. Beta-mannosidase B subfamily.

It catalyses the reaction Hydrolysis of terminal, non-reducing beta-D-mannose residues in beta-D-mannosides.. Its pathway is glycan metabolism; N-glycan degradation. In terms of biological role, exoglycosidase that cleaves the single beta-linked mannose residue from the non-reducing end of beta-mannosidic oligosaccharides of various complexity and length. Prefers mannobiose over mannotriose and has no activity against polymeric mannan. Is also severely restricted by galactosyl substitutions at the +1 subsite. This Aspergillus fumigatus (strain ATCC MYA-4609 / CBS 101355 / FGSC A1100 / Af293) (Neosartorya fumigata) protein is Beta-mannosidase B (mndB).